A 426-amino-acid polypeptide reads, in one-letter code: Cytochrome b-c1 complex subunit 2, mitochondrial (426 aa).

The N-terminal 30 residues, 1–30, are a transit peptide targeting the mitochondrion; it reads MKSFTRNLRRFQTPRRNLHGISYTPKKVEG.

Belongs to the peptidase M16 family. UQCRC2/QCR2 subfamily. As to quaternary structure, component of the ubiquinol-cytochrome c oxidoreductase (cytochrome b-c1 complex, complex III, CIII), a multisubunit enzyme composed of 3 respiratory subunits cytochrome b, cytochrome c1 and Rieske protein, 2 core protein subunits, and additional low-molecular weight protein subunits. The complex exists as an obligatory dimer and forms supercomplexes (SCs) in the inner mitochondrial membrane with cytochrome c oxidase (complex IV, CIV).

The protein localises to the mitochondrion inner membrane. In terms of biological role, component of the ubiquinol-cytochrome c oxidoreductase, a multisubunit transmembrane complex that is part of the mitochondrial electron transport chain which drives oxidative phosphorylation. The respiratory chain contains 3 multisubunit complexes succinate dehydrogenase (complex II, CII), ubiquinol-cytochrome c oxidoreductase (cytochrome b-c1 complex, complex III, CIII) and cytochrome c oxidase (complex IV, CIV), that cooperate to transfer electrons derived from NADH and succinate to molecular oxygen, creating an electrochemical gradient over the inner membrane that drives transmembrane transport and the ATP synthase. The cytochrome b-c1 complex catalyzes electron transfer from ubiquinol to cytochrome c, linking this redox reaction to translocation of protons across the mitochondrial inner membrane, with protons being carried across the membrane as hydrogens on the quinol. In the process called Q cycle, 2 protons are consumed from the matrix, 4 protons are released into the intermembrane space and 2 electrons are passed to cytochrome c. The polypeptide is Cytochrome b-c1 complex subunit 2, mitochondrial (qcr2) (Schizosaccharomyces pombe (strain 972 / ATCC 24843) (Fission yeast)).